The chain runs to 217 residues: MTFRAQMLDTLTSQSSRDLEAQALGLVPIVVETSGRGERSYDIYSRLLKERIVFLVGEVNDQTANLVVAQMLFLESENPDKDISFYINSPGGSVSAGMAIYDTMQFIKPDVSTLCMGLAASMGAFLLAAGAKGKRFALPNSRVMIHQPLGGARGQASDIEIQAREILYLKERLNHLLAHHTGQPVERIARDTDRDNFMSGDDAQAYGLVDQVAHKRP.

The active-site Nucleophile is the S121. The active site involves H146.

Belongs to the peptidase S14 family. As to quaternary structure, fourteen ClpP subunits assemble into 2 heptameric rings which stack back to back to give a disk-like structure with a central cavity, resembling the structure of eukaryotic proteasomes.

The protein localises to the cytoplasm. It catalyses the reaction Hydrolysis of proteins to small peptides in the presence of ATP and magnesium. alpha-casein is the usual test substrate. In the absence of ATP, only oligopeptides shorter than five residues are hydrolyzed (such as succinyl-Leu-Tyr-|-NHMec, and Leu-Tyr-Leu-|-Tyr-Trp, in which cleavage of the -Tyr-|-Leu- and -Tyr-|-Trp bonds also occurs).. Functionally, cleaves peptides in various proteins in a process that requires ATP hydrolysis. Has a chymotrypsin-like activity. Plays a major role in the degradation of misfolded proteins. This chain is ATP-dependent Clp protease proteolytic subunit 2, found in Paraburkholderia xenovorans (strain LB400).